Reading from the N-terminus, the 595-residue chain is Trafficking protein particle complex subunit 14 (595 aa).

Disordered stretches follow at residues 84–111 (ASVS…ECVE) and 494–513 (SNPP…SSPA).

As to quaternary structure, component of the multisubunit TRAPP II complex, which includes at least TRAPPC1, TRAPPC2, TRAPPC2L, TRAPPC3, TRAPPC4, TRAPPC5, TRAPPC6A/B, TRAPPC9, TRAPPC10 and TRAPPC14. TRAPPC9, TRAPPC10 and TRAPPC14 are specific subunits of the TRAPP II complex. Interacts with alpha-tubulin during mitosis.

The protein resides in the cytoplasm. Its subcellular location is the cytoskeleton. It localises to the spindle. It is found in the vesicle. The protein localises to the midbody. Specific subunit of the TRAPP (transport protein particle) II complex, a highly conserved vesicle tethering complex that functions in late Golgi trafficking as a membrane tether. TRAPP II complex also has GEF activity toward RAB1A. TRAPPC14 is required for ciliogenesis. This Danio rerio (Zebrafish) protein is Trafficking protein particle complex subunit 14 (trappc14).